The chain runs to 175 residues: NADH-ubiquinone oxidoreductase chain 6 (175 aa).

6 helical membrane-spanning segments follow: residues 1–21 (MMYI…GFSS), 24–44 (SPVY…GIIM), 51–71 (LGLV…GYTI), 87–107 (VVLS…VWLF), 113–133 (LVGF…GSFG), and 148–168 (YGFW…FIAI).

This sequence belongs to the complex I subunit 6 family. In terms of assembly, core subunit of respiratory chain NADH dehydrogenase (Complex I) which is composed of 45 different subunits.

Its subcellular location is the mitochondrion inner membrane. It catalyses the reaction a ubiquinone + NADH + 5 H(+)(in) = a ubiquinol + NAD(+) + 4 H(+)(out). In terms of biological role, core subunit of the mitochondrial membrane respiratory chain NADH dehydrogenase (Complex I) which catalyzes electron transfer from NADH through the respiratory chain, using ubiquinone as an electron acceptor. Essential for the catalytic activity and assembly of complex I. The chain is NADH-ubiquinone oxidoreductase chain 6 (MT-ND6) from Mammuthus primigenius (Siberian woolly mammoth).